Consider the following 472-residue polypeptide: Estrogen receptor beta (472 aa).

A modulating region spans residues 1–104 (MAFCSPAMMN…NPGSKRDAHF (104 aa)). 2 NR C4-type zinc fingers span residues 105–125 (CAVCSDYASGYHYGVWSCEGC) and 141–165 (CPATNQCTIDKNRRKSCQACRLRKC). The nuclear receptor DNA-binding region spans 105 to 170 (CAVCSDYASG…RLRKCYEVGM (66 aa)). Positions 217–449 (SPEQFVLTLL…DLLLEMLNAH (233 aa)) constitute an NR LBD domain.

Belongs to the nuclear hormone receptor family. NR3 subfamily. In terms of assembly, binds DNA as a homodimer. Can form a heterodimer with ER-alpha. As to expression, a high expression is seen in the telencephalon, diencephalon, pituitary, testis and kidneys but little or no expression is seen in the cerebellum, pectoral muscle and adrenal gland.

It is found in the nucleus. In terms of biological role, binds estrogens with an affinity similar to that of ER-alpha, and activates expression of reporter genes containing estrogen response elements (ERE) in an estrogen-dependent manner. The chain is Estrogen receptor beta (ESR2) from Coturnix japonica (Japanese quail).